Here is a 592-residue protein sequence, read N- to C-terminus: Aspartate--tRNA(Asp/Asn) ligase (592 aa).

Residue E172 participates in L-aspartate binding. The tract at residues 196–199 (QLFK) is aspartate. R218 serves as a coordination point for L-aspartate. ATP-binding positions include 218–220 (RDE) and Q227. An L-aspartate-binding site is contributed by H442. E476 contacts ATP. Residue R483 coordinates L-aspartate. Position 528 to 531 (528 to 531 (GWDR)) interacts with ATP. Residues 553-592 (SGTDPLTGAPTPITPEQRKEAGIDADPYAAAGRPPGRQSA) are disordered.

It belongs to the class-II aminoacyl-tRNA synthetase family. Type 1 subfamily. As to quaternary structure, homodimer.

The protein resides in the cytoplasm. The enzyme catalyses tRNA(Asx) + L-aspartate + ATP = L-aspartyl-tRNA(Asx) + AMP + diphosphate. Its function is as follows. Aspartyl-tRNA synthetase with relaxed tRNA specificity since it is able to aspartylate not only its cognate tRNA(Asp) but also tRNA(Asn). Reaction proceeds in two steps: L-aspartate is first activated by ATP to form Asp-AMP and then transferred to the acceptor end of tRNA(Asp/Asn). The polypeptide is Aspartate--tRNA(Asp/Asn) ligase (Acidothermus cellulolyticus (strain ATCC 43068 / DSM 8971 / 11B)).